The chain runs to 382 residues: Bifunctional enzyme IspD/IspF (382 aa).

The segment at 1-225 (MTFSVVIVAA…EHLAGVARVT (225 aa)) is 2-C-methyl-D-erythritol 4-phosphate cytidylyltransferase. Residues 226 to 382 (RVGQGFDAHR…SAVVAVETPA (157 aa)) are 2-C-methyl-D-erythritol 2,4-cyclodiphosphate synthase. Positions 232 and 234 each coordinate a divalent metal cation. Residues 232–234 (DAH) and 258–259 (HS) contribute to the 4-CDP-2-C-methyl-D-erythritol 2-phosphate site. H266 is an a divalent metal cation binding site. 4-CDP-2-C-methyl-D-erythritol 2-phosphate is bound by residues 280-282 (DIG), 356-359 (TTTE), F363, and R366.

In the N-terminal section; belongs to the IspD/TarI cytidylyltransferase family. IspD subfamily. It in the C-terminal section; belongs to the IspF family. Requires a divalent metal cation as cofactor.

It catalyses the reaction 2-C-methyl-D-erythritol 4-phosphate + CTP + H(+) = 4-CDP-2-C-methyl-D-erythritol + diphosphate. The enzyme catalyses 4-CDP-2-C-methyl-D-erythritol 2-phosphate = 2-C-methyl-D-erythritol 2,4-cyclic diphosphate + CMP. It functions in the pathway isoprenoid biosynthesis; isopentenyl diphosphate biosynthesis via DXP pathway; isopentenyl diphosphate from 1-deoxy-D-xylulose 5-phosphate: step 2/6. Its pathway is isoprenoid biosynthesis; isopentenyl diphosphate biosynthesis via DXP pathway; isopentenyl diphosphate from 1-deoxy-D-xylulose 5-phosphate: step 4/6. In terms of biological role, bifunctional enzyme that catalyzes the formation of 4-diphosphocytidyl-2-C-methyl-D-erythritol from CTP and 2-C-methyl-D-erythritol 4-phosphate (MEP) (IspD), and catalyzes the conversion of 4-diphosphocytidyl-2-C-methyl-D-erythritol 2-phosphate (CDP-ME2P) to 2-C-methyl-D-erythritol 2,4-cyclodiphosphate (ME-CPP) with a corresponding release of cytidine 5-monophosphate (CMP) (IspF). The polypeptide is Bifunctional enzyme IspD/IspF (Caulobacter vibrioides (strain ATCC 19089 / CIP 103742 / CB 15) (Caulobacter crescentus)).